The chain runs to 669 residues: DNA ligase (669 aa).

NAD(+)-binding positions include 33-37, 82-83, and Glu-115; these read DVTYD and SL. Lys-117 functions as the N6-AMP-lysine intermediate in the catalytic mechanism. NAD(+) is bound by residues Arg-138, Glu-172, Lys-286, and Lys-310. Cys-401, Cys-404, Cys-417, and Cys-422 together coordinate Zn(2+). Positions 589 to 669 constitute a BRCT domain; sequence VDSSFLFGKK…DIKNLVNLDD (81 aa).

It belongs to the NAD-dependent DNA ligase family. LigA subfamily. It depends on Mg(2+) as a cofactor. Requires Mn(2+) as cofactor.

The catalysed reaction is NAD(+) + (deoxyribonucleotide)n-3'-hydroxyl + 5'-phospho-(deoxyribonucleotide)m = (deoxyribonucleotide)n+m + AMP + beta-nicotinamide D-nucleotide.. Its function is as follows. DNA ligase that catalyzes the formation of phosphodiester linkages between 5'-phosphoryl and 3'-hydroxyl groups in double-stranded DNA using NAD as a coenzyme and as the energy source for the reaction. It is essential for DNA replication and repair of damaged DNA. This Borrelia duttonii (strain Ly) protein is DNA ligase.